The following is a 325-amino-acid chain: 4-hydroxy-3-methylbut-2-enyl diphosphate reductase (325 aa).

Position 13 (cysteine 13) interacts with [4Fe-4S] cluster. The (2E)-4-hydroxy-3-methylbut-2-enyl diphosphate site is built by histidine 42 and histidine 76. Histidine 42 and histidine 76 together coordinate dimethylallyl diphosphate. Isopentenyl diphosphate-binding residues include histidine 42 and histidine 76. Residue cysteine 98 coordinates [4Fe-4S] cluster. Residue histidine 126 coordinates (2E)-4-hydroxy-3-methylbut-2-enyl diphosphate. Histidine 126 is a dimethylallyl diphosphate binding site. Residue histidine 126 participates in isopentenyl diphosphate binding. Residue glutamate 128 is the Proton donor of the active site. Threonine 169 is a binding site for (2E)-4-hydroxy-3-methylbut-2-enyl diphosphate. Cysteine 230 contacts [4Fe-4S] cluster. (2E)-4-hydroxy-3-methylbut-2-enyl diphosphate is bound by residues serine 258, serine 259, asparagine 260, and serine 306. Residues serine 258, serine 259, asparagine 260, and serine 306 each coordinate dimethylallyl diphosphate. The isopentenyl diphosphate site is built by serine 258, serine 259, asparagine 260, and serine 306.

It belongs to the IspH family. Requires [4Fe-4S] cluster as cofactor.

The enzyme catalyses isopentenyl diphosphate + 2 oxidized [2Fe-2S]-[ferredoxin] + H2O = (2E)-4-hydroxy-3-methylbut-2-enyl diphosphate + 2 reduced [2Fe-2S]-[ferredoxin] + 2 H(+). The catalysed reaction is dimethylallyl diphosphate + 2 oxidized [2Fe-2S]-[ferredoxin] + H2O = (2E)-4-hydroxy-3-methylbut-2-enyl diphosphate + 2 reduced [2Fe-2S]-[ferredoxin] + 2 H(+). It functions in the pathway isoprenoid biosynthesis; dimethylallyl diphosphate biosynthesis; dimethylallyl diphosphate from (2E)-4-hydroxy-3-methylbutenyl diphosphate: step 1/1. Its pathway is isoprenoid biosynthesis; isopentenyl diphosphate biosynthesis via DXP pathway; isopentenyl diphosphate from 1-deoxy-D-xylulose 5-phosphate: step 6/6. Functionally, catalyzes the conversion of 1-hydroxy-2-methyl-2-(E)-butenyl 4-diphosphate (HMBPP) into a mixture of isopentenyl diphosphate (IPP) and dimethylallyl diphosphate (DMAPP). Acts in the terminal step of the DOXP/MEP pathway for isoprenoid precursor biosynthesis. The sequence is that of 4-hydroxy-3-methylbut-2-enyl diphosphate reductase from Prosthecochloris aestuarii (strain DSM 271 / SK 413).